The primary structure comprises 302 residues: CRISPR-associated endonuclease Cas1 1 (302 aa).

Residues Glu159, His219, and Glu234 each coordinate Mn(2+).

This sequence belongs to the CRISPR-associated endonuclease Cas1 family. As to quaternary structure, homodimer, forms a heterotetramer with a Cas2 homodimer. Mg(2+) is required as a cofactor. Mn(2+) serves as cofactor.

Functionally, CRISPR (clustered regularly interspaced short palindromic repeat), is an adaptive immune system that provides protection against mobile genetic elements (viruses, transposable elements and conjugative plasmids). CRISPR clusters contain spacers, sequences complementary to antecedent mobile elements, and target invading nucleic acids. CRISPR clusters are transcribed and processed into CRISPR RNA (crRNA). Acts as a dsDNA endonuclease. Involved in the integration of spacer DNA into the CRISPR cassette. This is CRISPR-associated endonuclease Cas1 1 from Pyrobaculum aerophilum (strain ATCC 51768 / DSM 7523 / JCM 9630 / CIP 104966 / NBRC 100827 / IM2).